A 348-amino-acid chain; its full sequence is 4-hydroxy-3-methylbut-2-en-1-yl diphosphate synthase (flavodoxin) (348 aa).

Residues Cys-263, Cys-266, Cys-298, and Glu-305 each coordinate [4Fe-4S] cluster.

It belongs to the IspG family. The cofactor is [4Fe-4S] cluster.

The enzyme catalyses (2E)-4-hydroxy-3-methylbut-2-enyl diphosphate + oxidized [flavodoxin] + H2O + 2 H(+) = 2-C-methyl-D-erythritol 2,4-cyclic diphosphate + reduced [flavodoxin]. The protein operates within isoprenoid biosynthesis; isopentenyl diphosphate biosynthesis via DXP pathway; isopentenyl diphosphate from 1-deoxy-D-xylulose 5-phosphate: step 5/6. Converts 2C-methyl-D-erythritol 2,4-cyclodiphosphate (ME-2,4cPP) into 1-hydroxy-2-methyl-2-(E)-butenyl 4-diphosphate. The sequence is that of 4-hydroxy-3-methylbut-2-en-1-yl diphosphate synthase (flavodoxin) from Dehalococcoides mccartyi (strain ATCC BAA-2100 / JCM 16839 / KCTC 5957 / BAV1).